Here is a 422-residue protein sequence, read N- to C-terminus: MVSESHHEALAAPPVTTVATVLPSNATEPASPGEGKEDAFSKLKEKFMNELHKIPLPPWALIAIAIVAVLLVLTCCFCICKKCLFKKKNKKKGKEKGGKNAINMKDVKDLGKTMKDQALKDDDAETGLTDGEEKEEPKEEEKLGKLQYSLDYDFQNNQLLVGIIQAAELPALDMGGTSDPYVKVFLLPDKKKKFETKVHRKTLNPVFNEQFTFKVPYSELGGKTLVMAVYDFDRFSKHDIIGEFKVPMNTVDFGHVTEEWRDLQSAEKEEQEKLGDICFSLRYVPTAGKLTVVILEAKNLKKMDVGGLSDPYVKIHLMQNGKRLKKKKTTIKKNTLNPYYNESFSFEVPFEQIQKVQVVVTVLDYDKIGKNDAIGKVFVGYNSTGAELRHWSDMLANPRRPIAQWHTLQVEEEVDAMLAVKK.

Residues 1–57 lie on the Vesicular side of the membrane; the sequence is MVSESHHEALAAPPVTTVATVLPSNATEPASPGEGKEDAFSKLKEKFMNELHKIPLP. An N-linked (GlcNAc...) asparagine glycan is attached at Asn-25. Residues 58-80 form a helical membrane-spanning segment; that stretch reads PWALIAIAIVAVLLVLTCCFCIC. 5 S-palmitoyl cysteine lipidation sites follow: Cys-75, Cys-76, Cys-78, Cys-80, and Cys-83. Residues 81-422 lie on the Cytoplasmic side of the membrane; it reads KKCLFKKKNK…EVDAMLAVKK (342 aa). The tract at residues 113–142 is disordered; the sequence is TMKDQALKDDDAETGLTDGEEKEEPKEEEK. Acidic residues predominate over residues 122–134; sequence DDAETGLTDGEEK. The residue at position 129 (Thr-129) is a Phosphothreonine. The phospholipid binding stretch occupies residues 136–382; the sequence is EPKEEEKLGK…AIGKVFVGYN (247 aa). The 120-residue stretch at 142–261 folds into the C2 1 domain; it reads KLGKLQYSLD…DFGHVTEEWR (120 aa). Positions 172, 173, and 179 each coordinate Ca(2+). Tyr-230 carries the phosphotyrosine modification. The Ca(2+) site is built by Asp-231, Phe-232, Asp-233, Ser-236, Lys-237, and Asp-239. Residue Ser-265 is modified to Phosphoserine. The 134-residue stretch at 273 to 406 folds into the C2 2 domain; the sequence is KLGDICFSLR…NPRRPIAQWH (134 aa). Asp-304 and Asp-310 together coordinate Ca(2+). 2 positions are modified to phosphoserine: Ser-343 and Ser-345. The Ca(2+) site is built by Asp-364, Asp-366, and Asp-372.

This sequence belongs to the synaptotagmin family. As to quaternary structure, homotetramer. Heterodimer; heterodimerizes with SYT2 in presence of calcium. Interacts with SCAMP5. Interacts with STON2. Forms a complex with SV2B, syntaxin 1 and SNAP25. Interacts with SV2A, SV2B and SV2C. Interacts with RIMS1. Interacts with PRRT2. Interacts with DNAJC5 in a phosphorylation-dependent manner. Interacts (via N-terminus) with RAB3A. Interacts with SYT12. Interacts with calmodulin. Interacts with DNM1 (via C-terminal proline-rich domain (PRD)); this interaction facilitates vesicle fission during clathrin-mediated endocytosis (CME). Ca(2+) serves as cofactor. In terms of processing, glycosylated. In terms of tissue distribution, expressed in melanocytes.

The protein resides in the cytoplasmic vesicle. Its subcellular location is the secretory vesicle membrane. It localises to the secretory vesicle. It is found in the synaptic vesicle membrane. The protein localises to the chromaffin granule membrane. The protein resides in the cytoplasm. Its function is as follows. Calcium sensor that participates in triggering neurotransmitter release at the synapse. May have a regulatory role in the membrane interactions during trafficking of synaptic vesicles at the active zone of the synapse. It binds acidic phospholipids with a specificity that requires the presence of both an acidic head group and a diacyl backbone. A Ca(2+)-dependent interaction between synaptotagmin and putative receptors for activated protein kinase C has also been reported. It can bind to at least three additional proteins in a Ca(2+)-independent manner; these are neurexins, syntaxin and AP2. Plays a role in dendrite formation by melanocytes. This Homo sapiens (Human) protein is Synaptotagmin-1.